A 434-amino-acid polypeptide reads, in one-letter code: Trigger factor (434 aa).

The PPIase FKBP-type domain maps to 161 to 246 (EDRVVIDFTG…VKQVQAPVLP (86 aa)).

This sequence belongs to the FKBP-type PPIase family. Tig subfamily.

The protein resides in the cytoplasm. It catalyses the reaction [protein]-peptidylproline (omega=180) = [protein]-peptidylproline (omega=0). In terms of biological role, involved in protein export. Acts as a chaperone by maintaining the newly synthesized protein in an open conformation. Functions as a peptidyl-prolyl cis-trans isomerase. The chain is Trigger factor from Dechloromonas aromatica (strain RCB).